The sequence spans 199 residues: NADH-quinone oxidoreductase subunit I (199 aa).

4Fe-4S ferredoxin-type domains are found at residues 45–75 and 91–120; these read LNRH…VEGA and RVYQ…MSNE. The [4Fe-4S] cluster site is built by C55, C58, C61, C65, C100, C103, C106, and C110. The tract at residues 164 to 199 is disordered; the sequence is GTPAAHMLSGEDDAASETTLDRSDDHSATYEEAERP. Positions 182 to 199 are enriched in basic and acidic residues; the sequence is TLDRSDDHSATYEEAERP.

This sequence belongs to the complex I 23 kDa subunit family. In terms of assembly, NDH-1 is composed of 14 different subunits. Subunits NuoA, H, J, K, L, M, N constitute the membrane sector of the complex. The cofactor is [4Fe-4S] cluster.

The protein resides in the cell membrane. It carries out the reaction a quinone + NADH + 5 H(+)(in) = a quinol + NAD(+) + 4 H(+)(out). Its function is as follows. NDH-1 shuttles electrons from NADH, via FMN and iron-sulfur (Fe-S) centers, to quinones in the respiratory chain. The immediate electron acceptor for the enzyme in this species is believed to be ubiquinone. Couples the redox reaction to proton translocation (for every two electrons transferred, four hydrogen ions are translocated across the cytoplasmic membrane), and thus conserves the redox energy in a proton gradient. The chain is NADH-quinone oxidoreductase subunit I from Acidothermus cellulolyticus (strain ATCC 43068 / DSM 8971 / 11B).